Consider the following 517-residue polypeptide: Squalene epoxidase 6 (517 aa).

2 consecutive transmembrane segments (helical) span residues 3–23 (FTHV…VFYL) and 45–65 (AADV…YALA). Residues 55–56 (VG), 75–76 (ER), Arg-83, Phe-88, Arg-156, Val-172, Asp-336, and Met-349 each bind FAD. The chain crosses the membrane as a helical span at residues 447–467 (LVYHLCAITLSSIGQLLSPFP).

Belongs to the squalene monooxygenase family. The cofactor is FAD. In terms of tissue distribution, expressed in seedlings, leaves, stems, inflorescences and siliques.

It localises to the membrane. It catalyses the reaction squalene + reduced [NADPH--hemoprotein reductase] + O2 = (S)-2,3-epoxysqualene + oxidized [NADPH--hemoprotein reductase] + H2O + H(+). It functions in the pathway terpene metabolism; lanosterol biosynthesis; lanosterol from farnesyl diphosphate: step 2/3. Catalyzes the stereospecific oxidation of squalene to (S)-2,3-epoxysqualene, and is considered to be a rate-limiting enzyme in steroid biosynthesis. The protein is Squalene epoxidase 6 (SQE6) of Arabidopsis thaliana (Mouse-ear cress).